Consider the following 186-residue polypeptide: Threonylcarbamoyl-AMP synthase (186 aa).

Residues G6–R186 enclose the YrdC-like domain.

This sequence belongs to the SUA5 family. TsaC subfamily.

The protein resides in the cytoplasm. The enzyme catalyses L-threonine + hydrogencarbonate + ATP = L-threonylcarbamoyladenylate + diphosphate + H2O. Its function is as follows. Required for the formation of a threonylcarbamoyl group on adenosine at position 37 (t(6)A37) in tRNAs that read codons beginning with adenine. Catalyzes the conversion of L-threonine, HCO(3)(-)/CO(2) and ATP to give threonylcarbamoyl-AMP (TC-AMP) as the acyladenylate intermediate, with the release of diphosphate. In Methylococcus capsulatus (strain ATCC 33009 / NCIMB 11132 / Bath), this protein is Threonylcarbamoyl-AMP synthase.